The sequence spans 348 residues: MSEKMVAIMKTKPGYGAELVEVDVPKPGPGEVLIKVLATSICGTDLHIYEWNEWAQSRIKPPQIMGHEVAGEVVEIGPGVEGIEVGDYVSVETHIVCGKCYACRRGQYHVCQNTKIFGVDTDGVFAEYAVVPAQNIWKNPKSIPPEYATLQEPLGNAVDTVLAGPISGKSVLITGAGPLGLLGIAVAKASGAYPVIVSEPSDFRRELAKKVGADYVINPFEEDVVKEVMDITDGNGVDVFLEFSGAPKALEQGLQAVTPAGRVSLLGLYPGKVTIDFNNLIIFKALTIYGITGRHLWETWYTVSRLLQSGKLNLDPIITHKYKGFDKYEEAFELMRAGKTGKVVFMLK.

C42 contacts Zn(2+). Active-site charge relay system residues include T44 and H47. 6 residues coordinate Zn(2+): H67, E68, C97, C100, C103, and C111. Residues L179, E199, R204, 266–268, and 291–292 contribute to the NAD(+) site; these read LGL and IT.

The protein belongs to the zinc-containing alcohol dehydrogenase family. As to quaternary structure, homodimer. Homotetramer; dimer of dimers. Zn(2+) is required as a cofactor.

It localises to the cytoplasm. The catalysed reaction is L-threonine + NAD(+) = (2S)-2-amino-3-oxobutanoate + NADH + H(+). The protein operates within amino-acid degradation; L-threonine degradation via oxydo-reductase pathway; glycine from L-threonine: step 1/2. Its activity is regulated as follows. Is totally inhibited by EDTA in vitro. In terms of biological role, catalyzes the NAD(+)-dependent oxidation of L-threonine to 2-amino-3-ketobutyrate. Is much less efficient when using NADP(+) instead of NAD(+). To a lesser extent, also catalyzes the oxidation of L-serine and DL-threo-3-phenylserine, but not that of L-allo-threonine, D-threonine and D-allo-threonine and many other L-amino acids. This Pyrococcus horikoshii (strain ATCC 700860 / DSM 12428 / JCM 9974 / NBRC 100139 / OT-3) protein is L-threonine 3-dehydrogenase.